The chain runs to 132 residues: MNRVLCAPAAGAVRALRLIGRTSRSLHPLPGSRDRAHPAAEEQDDPDRPTEFSSSKANPRRWSVGHSMGKGHQRPWWKVLPLSCFLVALIIWCYLREESEADQWLRQVWGEVPEPSDRSEEPETPAAYRART.

Residues 1–15 form the signal peptide; that stretch reads MNRVLCAPAAGAVRA. The Mitochondrial matrix portion of the chain corresponds to 16-78; the sequence is LRLIGRTSRS…GKGHQRPWWK (63 aa). The disordered stretch occupies residues 24 to 73; that stretch reads RSLHPLPGSRDRAHPAAEEQDDPDRPTEFSSSKANPRRWSVGHSMGKGHQ. The segment covering 32–50 has biased composition (basic and acidic residues); it reads SRDRAHPAAEEQDDPDRPT. Residues 79-95 traverse the membrane as a helical segment; it reads VLPLSCFLVALIIWCYL. The Mitochondrial intermembrane portion of the chain corresponds to 96–132; it reads REESEADQWLRQVWGEVPEPSDRSEEPETPAAYRART. The tract at residues 110-132 is disordered; that stretch reads GEVPEPSDRSEEPETPAAYRART.

This sequence belongs to the UQCC4 family. As to quaternary structure, forms a complex, named COMB/coordinator of mitochondrial CYTB biogenesis, composed of UQCC1, UQCC2, UQCC4, UQCC5 and UQCC6; stabilizes nascent cytochrome b/MT-CYB and promotes its membrane insertion. Forms a complex, named COMA, composed of UQCC1, UQCC2 and UQCC4; activates MT-CYB translation. Forms a complex, named COMC, composed of UQCC1, UQCC2; UQCC3 and UQCC4; mediates MT-CYB hemylation and association with the first nuclear-encoded complex III subunit UQCRQ. Complexes COMA and COMB are bound to the mitochondrion inner membrane by UQCC4.

The protein resides in the mitochondrion inner membrane. In terms of biological role, required for the assembly and stability of the mitochondrial ubiquinol-cytochrome c reductase complex (complex III (CIII) or cytochrome b-c1 complex), a multisubunit transmembrane complex that is part of the mitochondrial electron transport chain (ETC) which drives oxidative phosphorylation. This is Ubiquinol-cytochrome c reductase complex assembly factor 4 (UQCC4) from Pongo abelii (Sumatran orangutan).